The chain runs to 142 residues: MKTFSAKGHEVQRDWFVIDATDKVLGRVASEVALRLRGKHKPEFTPHVDTGDFIVVINAGKLRVTGTKATEKTYYRHSGYPGGIYETNFLKMQQRFPGRALEKAVKGMLPKGPLGYAMIKKLKVYAEATHPHAAQQPKALEL.

The protein belongs to the universal ribosomal protein uL13 family. Part of the 50S ribosomal subunit.

In terms of biological role, this protein is one of the early assembly proteins of the 50S ribosomal subunit, although it is not seen to bind rRNA by itself. It is important during the early stages of 50S assembly. This chain is Large ribosomal subunit protein uL13, found in Janthinobacterium sp. (strain Marseille) (Minibacterium massiliensis).